We begin with the raw amino-acid sequence, 74 residues long: uncharacterized protein (74 aa).

This is an uncharacterized protein from Escherichia coli (strain K12).